The sequence spans 567 residues: PHD finger protein 1 (567 aa).

Residues 1–31 (MAQPPRLSRSGASSLWDPASPAPTSGPRPRL) form a disordered region. Positions 29-86 (PRLWEGQDVLARWTDGLLYLGTIKKVDSAREVCLVQFEDDSQFLVLWKDISPAALPGE) constitute a Tudor domain. PHD-type zinc fingers lie at residues 87 to 142 (ELLC…CVFA) and 186 to 240 (QSYC…CRGG). 2 disordered regions span residues 333 to 441 (ARMP…TDAR) and 455 to 537 (HPSA…GYLS). Glycine 360 is modified (phosphoserine). The span at 371–386 (PEPEPLRRRQKGKVEE) shows a compositional bias: basic and acidic residues. Residue serine 420 is modified to Phosphoserine. Low complexity-rich tracts occupy residues 423–433 (PNQSYQGSSGY), 456–470 (PSASTAGTSGDSGPP), and 488–510 (SAPHSMTASSSSVSSPSPGLPRR). Gly residues predominate over residues 524-534 (GTGGGVRGGVG).

Belongs to the Polycomblike family. In terms of assembly, interacts with CHMP1. Associated component of the PRC2 complex. Interacts with p53/TP53. Highest levels in heart, skeletal muscle, and pancreas, lower levels in brain, placenta, lung, liver and kidney.

It is found in the nucleus. It localises to the cytoplasm. Its subcellular location is the cytoskeleton. The protein localises to the microtubule organizing center. The protein resides in the centrosome. Functionally, polycomb group (PcG) that specifically binds histone H3 trimethylated at 'Lys-36' (H3K36me3) and recruits the PRC2 complex. Involved in DNA damage response and is recruited at double-strand breaks (DSBs). Acts by binding to H3K36me3, a mark for transcriptional activation, and recruiting the PRC2 complex: it is however unclear whether recruitment of the PRC2 complex to H3K36me3 leads to enhance or inhibit H3K27me3 methylation mediated by the PRC2 complex. According to some reports, PRC2 recruitment by PHF1 promotes H3K27me3 and subsequent gene silencing by inducing spreading of PRC2 and H3K27me3 into H3K36me3 loci. According to another report, PHF1 recruits the PRC2 complex at double-strand breaks (DSBs) and inhibits the activity of PRC2. Regulates p53/TP53 stability and prolonges its turnover: may act by specifically binding to a methylated from of p53/TP53. The polypeptide is PHD finger protein 1 (PHF1) (Homo sapiens (Human)).